The sequence spans 88 residues: MANSKSAKKRALQSEKRRQHNASRRSMLRSYVKKVIAAINAGDHKAATEAFNAAQPIVDRMATKGLIHKNKAARQKSRLNTKIKALAA.

The tract at residues 1 to 27 is disordered; that stretch reads MANSKSAKKRALQSEKRRQHNASRRSM.

It belongs to the bacterial ribosomal protein bS20 family.

In terms of biological role, binds directly to 16S ribosomal RNA. This Shewanella sediminis (strain HAW-EB3) protein is Small ribosomal subunit protein bS20.